The sequence spans 99 residues: MEKMSHDPIAADIGTQVSDNALHGVTAGSTALTSVTGLVPAGADEVSAQAATAFTSEGIQLLASNASAQDQLHRAGEAVQDVARTYSQIDDGAAGVFAE.

The 90-residue stretch at 1 to 90 (MEKMSHDPIA…DVARTYSQID (90 aa)) folds into the PE domain.

The protein belongs to the mycobacterial PE family. Interacts with PPE68. PE35/PPE68 complex interacts with human TLR2.

It localises to the secreted. It is found in the cell surface. Its function is as follows. Plays a major role in RD1-associated pathogenesis, and may contribute to the establishment and maintenance of M.tuberculosis infection. Together with PPE68, stimulates the secretion of IL-10 and MCP-1 from human macrophages, via the interaction with human Toll-like receptor 2 (TLR2). The protein is PE family immunomodulator PE35 (PE35) of Mycobacterium tuberculosis (strain ATCC 25618 / H37Rv).